Reading from the N-terminus, the 947-residue chain is Zinc finger protein 268 (947 aa).

The 72-residue stretch at 81–152 folds into the KRAB domain; it reads LSFMDVFVDF…QAQVPNQTCP (72 aa). A Phosphoserine; by TBK1 modification is found at serine 178. C2H2-type zinc fingers lie at residues 276-298, 304-326, 332-354, 360-382, 388-410, 416-438, 444-466, 472-494, 500-522, 528-550, 556-578, 584-606, 612-634, 640-662, 668-690, 696-718, 724-746, 752-774, 780-802, 808-830, 836-858, 864-886, 892-914, and 920-942; these read FGCSCCEKAFSSKSYLLVHQQTH, YGCNECGKDFSSKSYLIVHQRIH, HECSECRKTFSFHSQLVIHQRIH, YECCECGKVFSRKDQLVSHQKTH, YVCNECGKAFGLKSQLIIHERIH, YECNECQKAFNTKSNLMVHQRTH, YVCSDCGKAFTFKSQLIVHQGIH, YGCIQCGKGFSLKSQLIVHQRSH, YVCNECGKAFRSKSYLIIHTRTH, HECNNCGKAFSFKSQLIIHQRIH, YECHECGKAFSRKYQLISHQRTH, YECTDCGKAFGLKSQLIIHQRTH, FECSECQKAFNTKSNLIVHQRTH, YSCNECGKAFTFKSQLIVHKGVH, YGCSQCAKTFSLKSQLIVHQRSH, YGCSECGKAFRSKSYLIIHMRTH, HECRECGKSFSFNSQLIVHQRIH, YECSECGKAFNRKDQLISHQRTH, YGCSECGKAFSSKSYLIIHMRTH, YECNECGKAFIWKSLLIVHERTH, YKCSQCEKSFSGKLRLLVHQRMH, YECSECGKAFIRNSQLIVHQRTH, YGCNECGKTFSQKSILSAHQRTH, and CKCTECGKAFCWKSQLIMHQRTH.

The protein belongs to the krueppel C2H2-type zinc-finger protein family. As to quaternary structure, interacts (via the KRAB domain) with TRIM28 (via the RBCC domain); the interaction increases ZNF268 nuclear localization activity. Isoform 2 interacts with CHUK and IKBKB; the interaction is further increased in a TNF-alpha-dependent manner. Interacts with TOLLIP; this interaction is impaired by ZNF268 phosphorylation at Ser-178. Forms a ternary complex with TBK1 and SETD4; the interaction between SETD4 and TBK1 is ZNF268-dependent and leads to TBK1 monomethylation. In terms of processing, phosphorylation at Ser-178 stabilizes the protein by interfering with its binding to TOLLIP, hence impairing its degradation by Tollip-mediated selective autophagy system. Overexpressed in ovarian cancer tissues compared to normal ovarian tissues. Isoform 1 and isoform 2 are expressed in squamous epithelium tissues. Isoform 2 is overexpressed in squamous cervical cancer (at protein level). Expressed in blood cells. Isoform 1 is expressed in pancreas, lung, skeletal muscle, heart, placenta, liver, kidney and brain. Isoform 2 expressed in chronic lymphocytic leukemia (CLL) and several tumor cell lines. Isoform 3 is expressed in several tumor cells. Isoform 5 is expressed in fetal liver and several tumor cells. Isoform 6 is weakly expressed in brain, lung amd small intestin and in several tumor cells. Isoform 7 is expressed in fetal liver and several tumor cells.

Its subcellular location is the nucleus. It localises to the cytoplasm. Acts as a transcriptional repressor. Inhibits erythroid differentiation and tumor cell proliferation. Plays a role during ovarian cancer development and progression. In terms of biological role, contributes to cervical carcinogenesis in part through the TNF-alpha-induced NF-kappa-B signaling pathway by interacting with the I-kappa-B-kinase (IKK) core complex. Functionally, involved in the regulation of antiviral interferon signaling. During viral infection, recruits SETD4 to TBK1, leading to TBK1 monomethylation, which is critical for the assembly of TBK1 complex and IRF3 signaling. The chain is Zinc finger protein 268 (ZNF268) from Homo sapiens (Human).